Reading from the N-terminus, the 442-residue chain is Histidine--tRNA ligase (442 aa).

The protein belongs to the class-II aminoacyl-tRNA synthetase family. In terms of assembly, homodimer.

Its subcellular location is the cytoplasm. It catalyses the reaction tRNA(His) + L-histidine + ATP = L-histidyl-tRNA(His) + AMP + diphosphate + H(+). In Treponema pallidum (strain Nichols), this protein is Histidine--tRNA ligase (hisS).